The sequence spans 477 residues: Methylenetetrahydrofolate--tRNA-(uracil-5-)-methyltransferase TrmFO (477 aa).

14-19 (GGGLAG) serves as a coordination point for FAD.

It belongs to the MnmG family. TrmFO subfamily. The cofactor is FAD.

The protein resides in the cytoplasm. The enzyme catalyses uridine(54) in tRNA + (6R)-5,10-methylene-5,6,7,8-tetrahydrofolate + NADH + H(+) = 5-methyluridine(54) in tRNA + (6S)-5,6,7,8-tetrahydrofolate + NAD(+). The catalysed reaction is uridine(54) in tRNA + (6R)-5,10-methylene-5,6,7,8-tetrahydrofolate + NADPH + H(+) = 5-methyluridine(54) in tRNA + (6S)-5,6,7,8-tetrahydrofolate + NADP(+). Its function is as follows. Catalyzes the folate-dependent formation of 5-methyl-uridine at position 54 (M-5-U54) in all tRNAs. In Rhizobium etli (strain ATCC 51251 / DSM 11541 / JCM 21823 / NBRC 15573 / CFN 42), this protein is Methylenetetrahydrofolate--tRNA-(uracil-5-)-methyltransferase TrmFO.